The primary structure comprises 428 residues: Trigger factor (428 aa).

One can recognise a PPIase FKBP-type domain in the interval 163 to 248; that stretch reads GDTVVIDFEG…VHEVKAKQLP (86 aa).

It belongs to the FKBP-type PPIase family. Tig subfamily.

Its subcellular location is the cytoplasm. The enzyme catalyses [protein]-peptidylproline (omega=180) = [protein]-peptidylproline (omega=0). In terms of biological role, involved in protein export. Acts as a chaperone by maintaining the newly synthesized protein in an open conformation. Functions as a peptidyl-prolyl cis-trans isomerase. In Geobacillus kaustophilus (strain HTA426), this protein is Trigger factor.